The following is a 247-amino-acid chain: 2,3-bisphosphoglycerate-dependent phosphoglycerate mutase (247 aa).

Substrate-binding positions include 8-15 (RHGESQWN), 21-22 (TG), Arg60, 87-90 (ERHY), Lys98, 114-115 (RR), and 183-184 (GN). The Tele-phosphohistidine intermediate role is filled by His9. The active-site Proton donor/acceptor is the Glu87.

Belongs to the phosphoglycerate mutase family. BPG-dependent PGAM subfamily.

The enzyme catalyses (2R)-2-phosphoglycerate = (2R)-3-phosphoglycerate. It functions in the pathway carbohydrate degradation; glycolysis; pyruvate from D-glyceraldehyde 3-phosphate: step 3/5. Its function is as follows. Catalyzes the interconversion of 2-phosphoglycerate and 3-phosphoglycerate. In Chlorobium limicola (strain DSM 245 / NBRC 103803 / 6330), this protein is 2,3-bisphosphoglycerate-dependent phosphoglycerate mutase.